A 550-amino-acid chain; its full sequence is Chaperonin GroEL (550 aa).

Residues 29-32 (TAGP), Lys50, 86-90 (DGTTT), Gly417, and Asp499 contribute to the ATP site.

Belongs to the chaperonin (HSP60) family. Forms a cylinder of 14 subunits composed of two heptameric rings stacked back-to-back. Interacts with the co-chaperonin GroES.

The protein localises to the cytoplasm. The enzyme catalyses ATP + H2O + a folded polypeptide = ADP + phosphate + an unfolded polypeptide.. Its function is as follows. Together with its co-chaperonin GroES, plays an essential role in assisting protein folding. The GroEL-GroES system forms a nano-cage that allows encapsulation of the non-native substrate proteins and provides a physical environment optimized to promote and accelerate protein folding. This Ehrlichia chaffeensis protein is Chaperonin GroEL.